The sequence spans 449 residues: Ras-related GTP-binding protein D (449 aa).

Positions 1 to 55 (MSQVLGKPQPQGEDGGEDQEEDELVGLAGYEDGPESSDAELDSGPEEGESRRNSW) are disordered. Acidic residues-rich tracts occupy residues 14 to 24 (DGGEDQEEDEL) and 32 to 47 (DGPESSDAELDSGPEE). 8 residues coordinate GTP: arginine 120, arginine 121, serine 122, glycine 123, lysine 124, serine 125, serine 126, and threonine 140. The GDP site is built by arginine 121, serine 122, glycine 123, lysine 124, serine 125, serine 126, threonine 140, glutamate 144, and threonine 146. Residues threonine 146, glycine 169, histidine 228, lysine 229, and aspartate 231 each contribute to the GTP site. Residues histidine 228, lysine 229, aspartate 231, serine 269, and isoleucine 270 each coordinate GDP. Isoleucine 270 contributes to the GTP binding site. A disordered region spans residues 428-449 (KAQSRLPKKTGATPNGTPRVLL).

It belongs to the GTR/RAG GTP-binding protein family. In terms of assembly, forms a heterodimer with RRAGA in a sequence-independent manner and RRAGB. Heterodimerization stabilizes RRAG proteins. The GDP-bound form of RRAGD (in complex with the GTP-bound form of RRAGA or RRAGB), interacts with RPTOR, thereby promoting recruitment of mTORC1 to the lysosomes. Component of the lysosomal folliculin complex (LFC), composed of FLCN, FNIP1 (or FNIP2), RagA/RRAGA or RagB/RRAGB GDP-bound, RagC/RRAGC or RagD/RRAGD GTP-bound, and Ragulator. Interacts with NOL8. Interacts with SH3BP4; the interaction with this negative regulator is most probably direct, preferentially occurs with the inactive GDP-bound form of RRAGD and is negatively regulated by amino acids. The Rag heterodimer interacts with SLC38A9; the probable amino acid sensor. Interacts with SESN1, SESN2 and SESN3. The GDP-bound form interacts with TFEB. The GDP-bound form interacts with TFE3. Expressed in the distal tubule of the kidney.

It localises to the cytoplasm. The protein localises to the nucleus. The protein resides in the lysosome membrane. The catalysed reaction is GTP + H2O = GDP + phosphate + H(+). Its activity is regulated as follows. The activation of RagD/RRAGD is mediated by a GTPase activating protein (GAP). In high-amino acid conditions, activated by GTPase activating protein FLCN that stimulates RRAGD GTPase activity to turn it into its active GDP-bound form. In response to amino acid depletion, the GATOR1 complex inactivates RagC/RRAGC by securing the GTP-bound inactive form. Guanine nucleotide-binding protein that plays a crucial role in the cellular response to amino acid availability through regulation of the mTORC1 signaling cascade. Forms heterodimeric Rag complexes with RagA/RRAGA or RagB/RRAGB and cycles between an inactive GTP-bound and an active GDP-bound form: RagD/RRAGD is in its active form when GDP-bound RagD/RRAGD forms a complex with GTP-bound RagA/RRAGA (or RagB/RRAGB) and in an inactive form when GTP-bound RagD/RRAGD heterodimerizes with GDP-bound RagA/RRAGA (or RagB/RRAGB). In its active form, promotes the recruitment of mTORC1 to the lysosomes and its subsequent activation by the GTPase RHEB. This is a crucial step in the activation of the MTOR signaling cascade by amino acids. Also plays a central role in the non-canonical mTORC1 complex, which acts independently of RHEB and specifically mediates phosphorylation of MiT/TFE factors TFEB and TFE3: GDP-bound RagD/RRAGD mediates recruitment of MiT/TFE factors TFEB and TFE3. The sequence is that of Ras-related GTP-binding protein D from Mus musculus (Mouse).